Reading from the N-terminus, the 56-residue chain is Small ribosomal subunit protein uS14 (56 aa).

The Zn(2+) site is built by C21, C24, C39, and C42.

Belongs to the universal ribosomal protein uS14 family. Zinc-binding uS14 subfamily. Part of the 30S ribosomal subunit. Requires Zn(2+) as cofactor.

In terms of biological role, binds 16S rRNA, required for the assembly of 30S particles. The polypeptide is Small ribosomal subunit protein uS14 (Pyrococcus abyssi (strain GE5 / Orsay)).